A 281-amino-acid chain; its full sequence is Small ribosomal subunit protein uS2 (281 aa).

The tract at residues 229-281 (RSGANKTEGEAAEQPMAAWEKELLTNEAPAEASAEAAAPAAAEGETAEAPKAE) is disordered. A compositionally biased stretch (low complexity) spans 255–275 (EAPAEASAEAAAPAAAEGETA).

This sequence belongs to the universal ribosomal protein uS2 family.

The sequence is that of Small ribosomal subunit protein uS2 from Bifidobacterium longum subsp. infantis (strain ATCC 15697 / DSM 20088 / JCM 1222 / NCTC 11817 / S12).